The primary structure comprises 309 residues: L-lactate dehydrogenase (309 aa).

NAD(+) is bound by residues V12, D33, R38, Y63, and 77 to 78 (GA). Substrate-binding positions include Q80, R86, and 118–121 (NPVD). NAD(+) is bound by residues 116–118 (ATN) and S141. Residue 146–149 (DSAR) participates in substrate binding. Beta-D-fructose 1,6-bisphosphate contacts are provided by R151 and H166. Catalysis depends on H173, which acts as the Proton acceptor. Residue Y219 is modified to Phosphotyrosine. Residue T228 participates in substrate binding.

Belongs to the LDH/MDH superfamily. LDH family. As to quaternary structure, homotetramer.

Its subcellular location is the cytoplasm. The catalysed reaction is (S)-lactate + NAD(+) = pyruvate + NADH + H(+). Its pathway is fermentation; pyruvate fermentation to lactate; (S)-lactate from pyruvate: step 1/1. Its activity is regulated as follows. Allosterically activated by fructose 1,6-bisphosphate (FBP). In terms of biological role, catalyzes the conversion of lactate to pyruvate. In Nitratidesulfovibrio vulgaris (strain ATCC 29579 / DSM 644 / CCUG 34227 / NCIMB 8303 / VKM B-1760 / Hildenborough) (Desulfovibrio vulgaris), this protein is L-lactate dehydrogenase.